Consider the following 365-residue polypeptide: tRNA-specific 2-thiouridylase MnmA (365 aa).

ATP-binding positions include 6 to 13 (AMSGGVDS) and Leu-32. Catalysis depends on Cys-101, which acts as the Nucleophile. Cys-101 and Cys-199 form a disulfide bridge. Residue Gly-125 coordinates ATP. The tract at residues 149–151 (KDQ) is interaction with tRNA. Cys-199 (cysteine persulfide intermediate) is an active-site residue.

It belongs to the MnmA/TRMU family.

It is found in the cytoplasm. The catalysed reaction is S-sulfanyl-L-cysteinyl-[protein] + uridine(34) in tRNA + AH2 + ATP = 2-thiouridine(34) in tRNA + L-cysteinyl-[protein] + A + AMP + diphosphate + H(+). Functionally, catalyzes the 2-thiolation of uridine at the wobble position (U34) of tRNA, leading to the formation of s(2)U34. This chain is tRNA-specific 2-thiouridylase MnmA, found in Corynebacterium glutamicum (strain R).